A 1179-amino-acid polypeptide reads, in one-letter code: ATP-dependent helicase/deoxyribonuclease subunit B (1179 aa).

Belongs to the helicase family. AddB/RexB type 2 subfamily. In terms of assembly, heterodimer of AddA and RexB. The cofactor is Mg(2+).

In terms of biological role, the heterodimer acts as both an ATP-dependent DNA helicase and an ATP-dependent, dual-direction single-stranded exonuclease. Recognizes the chi site generating a DNA molecule suitable for the initiation of homologous recombination. This subunit has 5' -&gt; 3' nuclease activity but not helicase activity. The protein is ATP-dependent helicase/deoxyribonuclease subunit B of Lactobacillus delbrueckii subsp. bulgaricus (strain ATCC BAA-365 / Lb-18).